The sequence spans 211 residues: Uracil phosphoribosyltransferase (211 aa).

5-phospho-alpha-D-ribose 1-diphosphate is bound by residues Arg79, Arg104, and 131–139 (DPMLATGGS). Uracil is bound by residues Ile196 and 201–203 (GDA). Asp202 is a binding site for 5-phospho-alpha-D-ribose 1-diphosphate.

This sequence belongs to the UPRTase family. The cofactor is Mg(2+).

It carries out the reaction UMP + diphosphate = 5-phospho-alpha-D-ribose 1-diphosphate + uracil. The protein operates within pyrimidine metabolism; UMP biosynthesis via salvage pathway; UMP from uracil: step 1/1. With respect to regulation, allosterically activated by GTP. Its function is as follows. Catalyzes the conversion of uracil and 5-phospho-alpha-D-ribose 1-diphosphate (PRPP) to UMP and diphosphate. This chain is Uracil phosphoribosyltransferase, found in Lactococcus lactis subsp. cremoris (strain SK11).